The chain runs to 148 residues: UPF0260 protein ECA2365 (148 aa).

This sequence belongs to the UPF0260 family.

In Pectobacterium atrosepticum (strain SCRI 1043 / ATCC BAA-672) (Erwinia carotovora subsp. atroseptica), this protein is UPF0260 protein ECA2365.